Here is a 224-residue protein sequence, read N- to C-terminus: Small ribosomal subunit protein uS3 (224 aa).

The KH type-2 domain occupies 38–106 (IRKFISKKLK…QVHINIVEIK (69 aa)).

It belongs to the universal ribosomal protein uS3 family. As to quaternary structure, part of the 30S ribosomal subunit. Forms a tight complex with proteins S10 and S14.

In terms of biological role, binds the lower part of the 30S subunit head. Binds mRNA in the 70S ribosome, positioning it for translation. The protein is Small ribosomal subunit protein uS3 of Lactobacillus helveticus (strain DPC 4571).